Consider the following 356-residue polypeptide: Mannonate dehydratase 2 (356 aa).

Belongs to the mannonate dehydratase family. Fe(2+) serves as cofactor. Mn(2+) is required as a cofactor.

The catalysed reaction is D-mannonate = 2-dehydro-3-deoxy-D-gluconate + H2O. Its pathway is carbohydrate metabolism; pentose and glucuronate interconversion. Its function is as follows. Catalyzes the dehydration of D-mannonate. The sequence is that of Mannonate dehydratase 2 from Bacillus licheniformis (strain ATCC 14580 / DSM 13 / JCM 2505 / CCUG 7422 / NBRC 12200 / NCIMB 9375 / NCTC 10341 / NRRL NRS-1264 / Gibson 46).